The primary structure comprises 185 residues: Meiotically up-regulated gene 5 protein (185 aa).

It is found in the cytoplasm. Functionally, required for correct meiotic chromosome segregation. In Schizosaccharomyces pombe (strain 972 / ATCC 24843) (Fission yeast), this protein is Meiotically up-regulated gene 5 protein (mug5).